We begin with the raw amino-acid sequence, 67 residues long: Large ribosomal subunit protein bL32 (67 aa).

Residues 1-19 (MAVPKRKQSRANTHARRSQ) show a composition bias toward basic residues. Residues 1-20 (MAVPKRKQSRANTHARRSQW) form a disordered region.

The protein belongs to the bacterial ribosomal protein bL32 family.

This Leifsonia xyli subsp. xyli (strain CTCB07) protein is Large ribosomal subunit protein bL32.